The chain runs to 237 residues: Aliphatic sulfonates import ATP-binding protein SsuB 1 (237 aa).

Positions 5–221 (LMDIRVEHKA…PRDRRDPLLA (217 aa)) constitute an ABC transporter domain. 38 to 45 (GPSGCGKS) lines the ATP pocket.

It belongs to the ABC transporter superfamily. Aliphatic sulfonates importer (TC 3.A.1.17.2) family. As to quaternary structure, the complex is composed of two ATP-binding proteins (SsuB), two transmembrane proteins (SsuC) and a solute-binding protein (SsuA).

The protein resides in the cell inner membrane. The enzyme catalyses ATP + H2O + aliphatic sulfonate-[sulfonate-binding protein]Side 1 = ADP + phosphate + aliphatic sulfonateSide 2 + [sulfonate-binding protein]Side 1.. In terms of biological role, part of the ABC transporter complex SsuABC involved in aliphatic sulfonates import. Responsible for energy coupling to the transport system. The chain is Aliphatic sulfonates import ATP-binding protein SsuB 1 from Pseudomonas syringae pv. syringae (strain B728a).